We begin with the raw amino-acid sequence, 259 residues long: Methanethiol S-methyltransferase 2 (259 aa).

5 helical membrane passes run 5–25, 46–66, 88–108, 115–135, and 182–202; these read LAILLYAIVSYAAFTVSFLYA, LGEAILVNLLLMSLFAIQHSV, TYVLLSSLILLLLFWQWRPIP, SGIAAWLLIGVHWLGWLIAFA, and FLLAFWATPAMTAGHLLFALA.

The protein belongs to the nurim family.

The protein localises to the membrane. The catalysed reaction is methanethiol + S-adenosyl-L-methionine = dimethyl sulfide + S-adenosyl-L-homocysteine + H(+). Functionally, catalyzes the methylation of methanethiol (MeSH) to yield dimethylsulphide (DMS). The protein is Methanethiol S-methyltransferase 2 of Bradyrhizobium diazoefficiens (strain JCM 10833 / BCRC 13528 / IAM 13628 / NBRC 14792 / USDA 110).